Reading from the N-terminus, the 87-residue chain is UPF0473 protein Dred_0776 (87 aa).

This sequence belongs to the UPF0473 family.

The sequence is that of UPF0473 protein Dred_0776 from Desulforamulus reducens (strain ATCC BAA-1160 / DSM 100696 / MI-1) (Desulfotomaculum reducens).